Reading from the N-terminus, the 147-residue chain is DNA base-flipping protein (147 aa).

Belongs to the MGMT family. ATL subfamily. In terms of assembly, interacts with several proteins, including UvrA, UvrD and the three subunits of the RNA polymerase.

Involved in DNA damage recognition. Binds DNA containing O(6)-methylguanine and larger O(6)-alkylguanine adducts. Binds to the damaged base and flips the base out of the DNA duplex into an extrahelical conformation, which allows processing by repair proteins. Also affects the regulation of gene expression in response to alkylation. The sequence is that of DNA base-flipping protein from Thermus thermophilus (strain ATCC 27634 / DSM 579 / HB8).